A 562-amino-acid polypeptide reads, in one-letter code: Oxygen-dependent choline dehydrogenase (562 aa).

4 to 33 (DYIIIGAGSAGNVLATRLTEDPNTTVLLLE) contributes to the FAD binding site. H473 functions as the Proton acceptor in the catalytic mechanism.

Belongs to the GMC oxidoreductase family. FAD is required as a cofactor.

It carries out the reaction choline + A = betaine aldehyde + AH2. It catalyses the reaction betaine aldehyde + NAD(+) + H2O = glycine betaine + NADH + 2 H(+). The protein operates within amine and polyamine biosynthesis; betaine biosynthesis via choline pathway; betaine aldehyde from choline (cytochrome c reductase route): step 1/1. Its function is as follows. Involved in the biosynthesis of the osmoprotectant glycine betaine. Catalyzes the oxidation of choline to betaine aldehyde and betaine aldehyde to glycine betaine at the same rate. In Escherichia coli O45:K1 (strain S88 / ExPEC), this protein is Oxygen-dependent choline dehydrogenase.